A 354-amino-acid chain; its full sequence is Protein RecA (354 aa).

An ATP-binding site is contributed by 67 to 74 (GPESSGKT).

Belongs to the RecA family.

The protein localises to the cytoplasm. In terms of biological role, can catalyze the hydrolysis of ATP in the presence of single-stranded DNA, the ATP-dependent uptake of single-stranded DNA by duplex DNA, and the ATP-dependent hybridization of homologous single-stranded DNAs. It interacts with LexA causing its activation and leading to its autocatalytic cleavage. This is Protein RecA from Enterobacter agglomerans (Erwinia herbicola).